The primary structure comprises 159 residues: Transcription repressor OFP6 (159 aa).

The tract at residues 39–60 (PKRPSSTYRHCHSSISSATPSS) is disordered. Over residues 51–60 (SSISSATPSS) the composition is skewed to low complexity. The OVATE domain maps to 70–129 (VEKDSDDPYLDFRQSMLQMILENQIYSKDELRELLQCFLSLNSHYHHGIIVRAFSEIWED).

As to quaternary structure, interacts with KNAT1 and KNAT7. In terms of tissue distribution, expressed in roots, shoots, rosette and cauline leaves, stems, flower buds and siliques.

Its subcellular location is the nucleus. In terms of biological role, transcriptional repressor that regulates multiple aspects of plant growth and development through the regulation of BEL1-LIKE (BLH) and KNOX TALE (KNAT) homeodomain transcription factors. This Arabidopsis thaliana (Mouse-ear cress) protein is Transcription repressor OFP6 (OFP6).